The chain runs to 970 residues: GEM-interacting protein (970 aa).

Serine 19 bears the Phosphoserine mark. Disordered stretches follow at residues 44-76 (PLLS…EGPV), 224-263 (SEDL…AQAK), and 377-478 (PLDI…ENGL). A compositionally biased stretch (polar residues) spans 56-65 (PTATVTNEAS). 6 positions are modified to phosphoserine: serine 71, serine 231, serine 234, serine 243, serine 437, and serine 441. An F-BAR domain is found at 81–344 (EELDLRLIRT…CCAPFEPGQR (264 aa)). Residues 231 to 246 (SQGSPEDSAPQASPGP) show a composition bias toward polar residues. Over residues 459–472 (SSDDFEERDPDLGD) the composition is skewed to acidic residues. The Phorbol-ester/DAG-type zinc-finger motif lies at 493 to 537 (THQLRRLRGPAKCRECEAFMVSGTECEECFLTCHKRCLETLLILC). One can recognise a Rho-GAP domain in the interval 554 to 757 (LQLPRDFPEE…FLIVHYEQIF (204 aa)). The residue at position 660 (threonine 660) is a Phosphothreonine. Positions 762-878 (LPQATEPPPQ…PVKYPRGGVR (117 aa)) are disordered. Pro residues predominate over residues 766 to 778 (TEPPPQDSSPAPG). Positions 815–830 (EQHPTATPTEIPTPQS) are enriched in polar residues. The span at 831 to 844 (DQREDVAEDTKDGG) shows a compositional bias: basic and acidic residues. Polar residues predominate over residues 847–863 (VSSQGPEDSLLGTQSRG). A phosphoserine mark is found at serine 885, serine 907, serine 914, serine 919, and serine 923. The interval 897–932 (ETPITSVPRGSLRGRGPSPAAASPEGSPLRRTPLPK) is disordered. Residues 910–923 (GRGPSPAAASPEGS) are compositionally biased toward low complexity.

As to quaternary structure, interacts with GEM through its N-terminal.

In terms of biological role, stimulates, in vitro and in vivo, the GTPase activity of RhoA. This is GEM-interacting protein (GMIP) from Homo sapiens (Human).